Reading from the N-terminus, the 171-residue chain is MTKQHAFTREDLLRCSRGELFGPGNAQLPAPNMLMIDRIVHISDVGGKYGKGELVAELDINPDLWFFACHFEGDPVMPGCLGLDAMWQLVGFYLGWQGNPGRGRALGSGEVKFFGQVLPTAKKVTYNIHIKRTINRSLVLAIADGTVSVDGREIYSAEGLRVGLFTSTDSF.

The active site involves His-70.

Belongs to the thioester dehydratase family. FabA subfamily. As to quaternary structure, homodimer.

It is found in the cytoplasm. The enzyme catalyses a (3R)-hydroxyacyl-[ACP] = a (2E)-enoyl-[ACP] + H2O. It carries out the reaction (3R)-hydroxydecanoyl-[ACP] = (2E)-decenoyl-[ACP] + H2O. The catalysed reaction is (2E)-decenoyl-[ACP] = (3Z)-decenoyl-[ACP]. The protein operates within lipid metabolism; fatty acid biosynthesis. In terms of biological role, necessary for the introduction of cis unsaturation into fatty acids. Catalyzes the dehydration of (3R)-3-hydroxydecanoyl-ACP to E-(2)-decenoyl-ACP and then its isomerization to Z-(3)-decenoyl-ACP. Can catalyze the dehydratase reaction for beta-hydroxyacyl-ACPs with saturated chain lengths up to 16:0, being most active on intermediate chain length. This is 3-hydroxydecanoyl-[acyl-carrier-protein] dehydratase from Pseudomonas aeruginosa (strain LESB58).